Consider the following 33-residue polypeptide: MFKLLLVLALTMLAQSALAGGGSKSTDTVIRFG.

Residues 1–19 form the signal peptide; that stretch reads MFKLLLVLALTMLAQSALA. A Phenylalanine amide modification is found at F32.

This sequence belongs to the FARP (FMRFamide related peptide) family. Expressed by the venom secretory cell of the spine. The spine is a cuticular structure containing a single large nucleated venom-secreting cell at its base. It is an independent unit capable of producing, storing and injecting venom. On the back of A.stimulea caterpillars, spines are grouped together by 50 to 100 to form scoli, of which there are eight.

It is found in the secreted. Functionally, is toxic when injected into Drosophila melanogaster. Also shows a low anthelmintic activity against the parasitic nematode H.contortus (drug susceptible Kirby isolate). This chain is U-limacoditoxin(13)-As11, found in Acharia stimulea (Saddleback caterpillar moth).